We begin with the raw amino-acid sequence, 165 residues long: Lipoprotein signal peptidase (165 aa).

4 helical membrane passes run 7 to 27 (FFLLLGLIITVLLDQAIKYWI), 28 to 48 (THTMLLGTEIPLFPFISLYHV), 61 to 81 (FSHWGLIALTITIIVFLFWLW), and 87 to 107 (DKALSRFGIVLIIGGAIGNLI). Active-site residues include aspartate 117 and aspartate 136. The helical transmembrane segment at 128-148 (SFAIFNLADTFITLGAISILI) threads the bilayer.

Belongs to the peptidase A8 family.

Its subcellular location is the cell inner membrane. The enzyme catalyses Release of signal peptides from bacterial membrane prolipoproteins. Hydrolyzes -Xaa-Yaa-Zaa-|-(S,diacylglyceryl)Cys-, in which Xaa is hydrophobic (preferably Leu), and Yaa (Ala or Ser) and Zaa (Gly or Ala) have small, neutral side chains.. It participates in protein modification; lipoprotein biosynthesis (signal peptide cleavage). Functionally, this protein specifically catalyzes the removal of signal peptides from prolipoproteins. This Bartonella bacilliformis (strain ATCC 35685 / KC583 / Herrer 020/F12,63) protein is Lipoprotein signal peptidase.